We begin with the raw amino-acid sequence, 400 residues long: Nicotinate phosphoribosyltransferase (400 aa).

Histidine 220 is subject to Phosphohistidine; by autocatalysis.

The protein belongs to the NAPRTase family. Transiently phosphorylated on a His residue during the reaction cycle. Phosphorylation strongly increases the affinity for substrates and increases the rate of nicotinate D-ribonucleotide production. Dephosphorylation regenerates the low-affinity form of the enzyme, leading to product release.

The enzyme catalyses nicotinate + 5-phospho-alpha-D-ribose 1-diphosphate + ATP + H2O = nicotinate beta-D-ribonucleotide + ADP + phosphate + diphosphate. It participates in cofactor biosynthesis; NAD(+) biosynthesis; nicotinate D-ribonucleotide from nicotinate: step 1/1. Its function is as follows. Catalyzes the synthesis of beta-nicotinate D-ribonucleotide from nicotinate and 5-phospho-D-ribose 1-phosphate at the expense of ATP. The protein is Nicotinate phosphoribosyltransferase of Salmonella heidelberg (strain SL476).